Reading from the N-terminus, the 449-residue chain is Naphthalene 1,2-dioxygenase system, large oxygenase component (449 aa).

In terms of domain architecture, Rieske spans Trp39–Glu137. The [2Fe-2S] cluster site is built by Cys81, His83, Cys101, and His104. Fe cation is bound by residues His208, His213, and Asp362.

This sequence belongs to the bacterial ring-hydroxylating dioxygenase alpha subunit family. As to quaternary structure, the naphthalene dioxygenase (NDO) multicomponent enzyme system is composed of an electron transfer component and a dioxygenase component (iron sulfur protein (ISP)). The electron transfer component is composed of a ferredoxin reductase (NdoR) and a ferredoxin (NdoA), and the dioxygenase component is formed of a heterohexamer (trimer of heterodimers) of three large alpha subunits (NdoB) and three small beta subunits (NdoC). It depends on [2Fe-2S] cluster as a cofactor. Requires Fe(2+) as cofactor.

The catalysed reaction is naphthalene + NADH + O2 + H(+) = (1R,2S)-1,2-dihydronaphthalene-1,2-diol + NAD(+). It participates in aromatic compound metabolism; naphthalene degradation. Its function is as follows. Component of the naphthalene dioxygenase (NDO) multicomponent enzyme system which catalyzes the incorporation of both atoms of molecular oxygen into naphthalene to form cis-(1R,2S)-dihydroxy-1,2-dihydronaphthalene. The alpha subunit has a catalytic role in the holoenzyme. Also able to catalyze the cis-dihydroxylation of biphenyl and phenanthrene. The sequence is that of Naphthalene 1,2-dioxygenase system, large oxygenase component from Pseudomonas putida (Arthrobacter siderocapsulatus).